Reading from the N-terminus, the 1447-residue chain is Adhesion G protein-coupled receptor L3 (1447 aa).

Residues 1-19 (MWPSQLLIFMMLLAPIIHA) form the signal peptide. At 20–862 (FSRAPIPMAV…VKHSDAVHDL (843 aa)) the chain is on the extracellular side. Residues 35 to 124 (SCESYPIELR…KYLEVQYECV (90 aa)) form the SUEL-type lectin domain. 5 cysteine pairs are disulfide-bonded: Cys36-Cys66, Cys45-Cys123, Cys78-Cys110, Cys91-Cys97, and Cys135-Cys317. Residue Asn93 is glycosylated (N-linked (GlcNAc...) asparagine). Residues 134-393 (LCPGLLKGVY…VVKYSLDFGP (260 aa)) form the Olfactomedin-like domain. The interaction with FLRT3 stretch occupies residues 249–279 (YHDTSPYRWGGKSDIDLAVDENGLWVIYATE). 4 residues coordinate Ca(2+): Asp264, Asn312, Ala313, and Val367. The tract at residues 426–473 (DISTTGPLGMGSTTTSTTLRTTTLSPGRSTTPSVSGRRNRSTSTPSPA) is disordered. Residues 428-458 (STTGPLGMGSTTTSTTLRTTTLSPGRSTTPS) are compositionally biased toward low complexity. Residues Asn464, Asn549, Asn746, Asn759, Asn804, and Asn830 are each glycosylated (N-linked (GlcNAc...) asparagine). Residues 675–854 (DIVRENTDNI…AVLMAHVEVK (180 aa)) enclose the GAIN-B domain. 2 cysteine pairs are disulfide-bonded: Cys805/Cys836 and Cys824/Cys838. The segment at 805–854 (CSFWSYSKRTMTGYWSTQGCRLLTTNKTHTTCSCNHLTNFAVLMAHVEVK) is GPS. The segment at 842–855 (TNFAVLMAHVEVKH) is stachel. Residues 863–888 (LLDVITWVGILLSLVCLLICIFTFCF) traverse the membrane as a helical segment. Over 889–896 (FRGLQSDR) the chain is Cytoplasmic. Residues 897 to 918 (NTIHKNLCISLFVAELLFLIGI) traverse the membrane as a helical segment. The Extracellular portion of the chain corresponds to 919–926 (NRTDQPIA). Residues 927 to 950 (CAVFAALLHFFFLAAFTWMFLEGV) form a helical membrane-spanning segment. Cys927 and Cys999 are oxidised to a cystine. Over 951–967 (QLYIMLVEVFESEHSRR) the chain is Cytoplasmic. A helical membrane pass occupies residues 968-990 (KYFYLVGYGMPALIVAVSAAVDY). The Extracellular segment spans residues 991–1005 (RSYGTDKVCWLRLDT). Residues 1006-1027 (YFIWSFIGPATLIIMLNVIFLG) form a helical membrane-spanning segment. The Cytoplasmic portion of the chain corresponds to 1028 to 1053 (IALYKMFHHTAILKPESGCLDNIKSW). The helical transmembrane segment at 1054–1073 (VIGAIALLCLLGLTWAFGLM) threads the bilayer. Residues 1074–1078 (YINES) lie on the Extracellular side of the membrane. N-linked (GlcNAc...) asparagine glycosylation is present at Asn1076. The helical transmembrane segment at 1079 to 1104 (TVIMAYLFTIFNSLQGMFIFIFHCVL) threads the bilayer. Residues 1105-1447 (QKKVRKEYGK…KGPAHLVTSL (343 aa)) lie on the Cytoplasmic side of the membrane. The segment at 1123-1147 (GKSTESSIGSGKTSGSRTPGRYSTG) is disordered. Phosphoserine is present on Ser1164. The interval 1423–1447 (IVPPNKDGTPPEGSSKGPAHLVTSL) is disordered. Positions 1442-1447 (HLVTSL) match the PDZ-binding motif.

It belongs to the G-protein coupled receptor 2 family. LN-TM7 subfamily. Heterodimer of 2 chains generated by proteolytic processing; the large extracellular N-terminal fragment and the membrane-bound C-terminal fragment predominantly remain associated and non-covalently linked. Interacts (via olfactomedin-like domain) with FLRT1 (via extracellular domain). Interacts (via olfactomedin-like domain) with FLRT2 (via extracellular domain). Interacts (via olfactomedin-like domain) with FLRT3 (via extracellular domain); the interaction is direct. Interacts (via extracellular domain) with TENM1. Interacts (via extracellular domain) with TENM2. Interacts (via extracellular domain) with TENM3. Identified in a complex with FLRT3 and UNC5B; does not interact with UNC5B by itself. Identified in a complex with FLRT3 and UNC5D; does not interact with UNC5D by itself. In terms of assembly, interacts (via PDZ-binding motif) with SHANK3. Interacts (via PDZ-binding motif) with DLG4. Post-translationally, autoproteolytically processed at the GPS region of the GAIN-B domain; this cleavage modulates receptor activity.

It localises to the cell membrane. The protein resides in the postsynaptic cell membrane. It is found in the cell projection. The protein localises to the axon. Its subcellular location is the cell junction. Its activity is regulated as follows. Forms a heterodimer of 2 chains generated by proteolytic processing that remain associated through non-covalent interactions mediated by the GAIN-B domain. In the inactivated receptor, the Stachel sequence (also named stalk) is embedded in the GAIN-B domain, where it adopts a beta-strand conformation. On activation, the Stachel moves into the 7 transmembrane region and adopts a twisted hook-shaped configuration that forms contacts within the receptor, leading to coupling of a G-alpha protein, which activates signaling. The cleaved GAIN-B and N-terminal domains can then dissociate from the rest of the receptor. Orphan adhesion G-protein coupled receptor (aGPCR), which mediates synapse specificity. Ligand binding causes a conformation change that triggers signaling via guanine nucleotide-binding proteins (G proteins) and modulates the activity of downstream effectors. ADGRL3 is coupled with different classes of G alpha proteins, such as G(12)/G(13), G(s), G(i) or G(q), depending on the context. Coupling to G(12)/G(13) G proteins, which mediates the activation Rho small GTPases is the most efficient. Following G-protein coupled receptor activation, associates with cell adhesion molecules that are expressed at the surface of adjacent cells to direct synapse specificity. Specifically mediates the establishment of Schaffer-collateral synapses formed by CA3-region axons on CA1-region pyramidal neurons in the hippocampus. Localizes to postsynaptic spines in excitatory synapses in the S.oriens and S.radiatum and interacts with presynaptic cell adhesion molecules FLRT3 and TENM2, promoting synapse formation. Plays a role in the development of glutamatergic synapses in the cortex. Important in determining the connectivity rates between the principal neurons in the cortex. In terms of biological role, orphan adhesion G-protein coupled receptor (aGPCR), which mediates synapse specificity. Ligand binding causes a conformation change that triggers signaling via guanine nucleotide-binding proteins (G proteins) and modulates the activity of downstream effectors, such as adenylate cyclase. Isoform 1 is specifically coupled to G(s) G proteins and mediates activation of adenylate cyclase activity. Following G-protein coupled receptor activation, undergoes liquid-liquid phase transition, associates with (1) cell adhesion molecules that are expressed at the surface of adjacent cells, as well as (2) PDZ-containing proteins, such as SHANK3 and DLG4, in the cytoplasm to direct synapse formation. This Homo sapiens (Human) protein is Adhesion G protein-coupled receptor L3.